The chain runs to 159 residues: Transcriptional repressor NrdR (159 aa).

Residues 3–34 fold into a zinc finger; sequence CPFCRHDDTQVVDSRVSEDGAAIRRRRRCSAC. The 91-residue stretch at 49–139 folds into the ATP-cone domain; the sequence is PAVVKKDGSR…VYRRFEDVSE (91 aa).

The protein belongs to the NrdR family. The cofactor is Zn(2+).

Functionally, negatively regulates transcription of bacterial ribonucleotide reductase nrd genes and operons by binding to NrdR-boxes. This Burkholderia pseudomallei (strain 1106a) protein is Transcriptional repressor NrdR.